The chain runs to 475 residues: Ammonium transporter 2 (475 aa).

Transmembrane regions (helical) follow at residues A27–V47, S55–Y75, L120–L140, W148–W168, G183–G203, V218–G238, T254–G274, I279–I299, W302–I322, L336–F356, and A389–I409.

It belongs to the ammonia transporter channel (TC 1.A.11.2) family. Higher expression in shoots than roots.

The protein resides in the cell membrane. Its function is as follows. High affinity ammonium transporter that may play an important role in moving ammonium between the apoplast and symplast of cells throughout the plant. Does not transport methylammonium. The protein is Ammonium transporter 2 (AMT2) of Arabidopsis thaliana (Mouse-ear cress).